A 471-amino-acid polypeptide reads, in one-letter code: tRNA-2-methylthio-N(6)-dimethylallyladenosine synthase (471 aa).

Positions 31–149 (LYYHIETYGC…FPQLLWEALN (119 aa)) constitute an MTTase N-terminal domain. 6 residues coordinate [4Fe-4S] cluster: C40, C76, C110, C186, C190, and C193. The 231-residue stretch at 172 to 402 (RDSNLKAWVN…IELQNKISLE (231 aa)) folds into the Radical SAM core domain. The TRAM domain maps to 405–468 (AELRGKIVEV…AWTMQGELVE (64 aa)).

This sequence belongs to the methylthiotransferase family. MiaB subfamily. As to quaternary structure, monomer. Requires [4Fe-4S] cluster as cofactor.

It is found in the cytoplasm. The catalysed reaction is N(6)-dimethylallyladenosine(37) in tRNA + (sulfur carrier)-SH + AH2 + 2 S-adenosyl-L-methionine = 2-methylsulfanyl-N(6)-dimethylallyladenosine(37) in tRNA + (sulfur carrier)-H + 5'-deoxyadenosine + L-methionine + A + S-adenosyl-L-homocysteine + 2 H(+). Its function is as follows. Catalyzes the methylthiolation of N6-(dimethylallyl)adenosine (i(6)A), leading to the formation of 2-methylthio-N6-(dimethylallyl)adenosine (ms(2)i(6)A) at position 37 in tRNAs that read codons beginning with uridine. The sequence is that of tRNA-2-methylthio-N(6)-dimethylallyladenosine synthase from Thermoanaerobacter sp. (strain X514).